The chain runs to 358 residues: Forkhead box protein I1c (358 aa).

A compositionally biased stretch (polar residues) spans 1–13 (MNSIHLPSHQRTS). 2 disordered regions span residues 1 to 25 (MNSI…PKGA) and 191 to 255 (DNGN…PSGI). Positions 106–200 (RPPYSYSALI…DNGNFRRKRK (95 aa)) form a DNA-binding region, fork-head.

It localises to the nucleus. Functionally, probable transcription factor. The sequence is that of Forkhead box protein I1c from Xenopus tropicalis (Western clawed frog).